Consider the following 307-residue polypeptide: Small ribosomal subunit biogenesis GTPase RsgA (307 aa).

The CP-type G domain occupies 80 to 237 (KADLRQTIVS…IVDTPGIKEF (158 aa)). Residues 129-132 (NKID) and 180-188 (GQSGVGKSS) each bind GTP. Zn(2+)-binding residues include cysteine 261, cysteine 266, histidine 268, and cysteine 274.

It belongs to the TRAFAC class YlqF/YawG GTPase family. RsgA subfamily. As to quaternary structure, monomer. Associates with 30S ribosomal subunit, binds 16S rRNA. Requires Zn(2+) as cofactor.

It is found in the cytoplasm. Functionally, one of several proteins that assist in the late maturation steps of the functional core of the 30S ribosomal subunit. Helps release RbfA from mature subunits. May play a role in the assembly of ribosomal proteins into the subunit. Circularly permuted GTPase that catalyzes slow GTP hydrolysis, GTPase activity is stimulated by the 30S ribosomal subunit. This chain is Small ribosomal subunit biogenesis GTPase RsgA, found in Borreliella burgdorferi (strain ATCC 35210 / DSM 4680 / CIP 102532 / B31) (Borrelia burgdorferi).